Here is a 340-residue protein sequence, read N- to C-terminus: Replication factor C subunit 2 (340 aa).

59 to 66 (GSPGTGKT) is a binding site for ATP.

This sequence belongs to the activator 1 small subunits family. As to quaternary structure, heteropentamer of subunits rfc1, rfc2, rfc3, rfc4 and rfc5 that forms a complex (RFC) with PCNA in the presence of ATP. Two other complexes exist where rfc1 can be replaced by either ctf18 or elg1 to form the ctf18-RFC or the elg1-RFC complexes respectively.

The protein localises to the nucleus. The elongation of primed DNA templates by DNA polymerase delta and epsilon requires the action of the accessory proteins PCNA and activator 1. Subunit 2 binds ATP and single-stranded DNA. The sequence is that of Replication factor C subunit 2 (rfc2) from Schizosaccharomyces pombe (strain 972 / ATCC 24843) (Fission yeast).